Here is a 351-residue protein sequence, read N- to C-terminus: Outer membrane protein A (351 aa).

A signal peptide spans 1 to 21 (MKKTAIAITVALAGFATVAQA). Transmembrane regions (beta stranded) follow at residues 27-37 (TWYTGAKLGWS), 55-66 (QLGAGAFGGYQV), 70-78 (VGFEMGYDW), 96-107 (QGVQLTAKLGYP), 112-120 (LDVYTRLGG), 147-156 (PVFAGGVEWA), 161-168 (IATRLEYQ), and 187-195 (LLSLGVSYR). 4 consecutive repeat copies span residues 206–207 (AP), 208–209 (AP), 210–211 (AP), and 212–213 (AP). The segment at 206–213 (APAPAPAP) is 4 X 2 AA tandem repeats of A-P. The region spanning 215-343 (VQTKHFTLKS…RVEIEVKGIK (129 aa)) is the OmpA-like domain. A disulfide bridge connects residues Cys316 and Cys328.

The protein belongs to the outer membrane OOP (TC 1.B.6) superfamily. OmpA family. As to quaternary structure, monomer and homodimer.

Its subcellular location is the cell outer membrane. With TolR probably plays a role in maintaining the position of the peptidoglycan cell wall in the periplasm. Acts as a porin with low permeability that allows slow penetration of small solutes; an internal gate slows down solute passage. Functionally, required for conjugation with F-type plasmids; probably serves as the mating receptor on recipient cells. This chain is Outer membrane protein A, found in Shigella dysenteriae.